A 143-amino-acid chain; its full sequence is Large ribosomal subunit protein uL11 (143 aa).

This sequence belongs to the universal ribosomal protein uL11 family. As to quaternary structure, part of the ribosomal stalk of the 50S ribosomal subunit. Interacts with L10 and the large rRNA to form the base of the stalk. L10 forms an elongated spine to which L12 dimers bind in a sequential fashion forming a multimeric L10(L12)X complex. Post-translationally, one or more lysine residues are methylated.

Its function is as follows. Forms part of the ribosomal stalk which helps the ribosome interact with GTP-bound translation factors. This is Large ribosomal subunit protein uL11 from Koribacter versatilis (strain Ellin345).